The primary structure comprises 96 residues: UPF0235 protein Helmi_20270 (96 aa).

The protein belongs to the UPF0235 family.

The sequence is that of UPF0235 protein Helmi_20270 from Heliobacterium modesticaldum (strain ATCC 51547 / Ice1).